Reading from the N-terminus, the 62-residue chain is Ranacyclin-T (62 aa).

The signal sequence occupies residues 1–22 (MFTMKKTLLVLFFLGVVSLSLC). Positions 23–43 (VEERDADEEDGGEVMEEEVKR) are excised as a propeptide. A disulfide bond links C49 and C59. At K60 the chain carries Lysine amide.

The protein belongs to the frog skin active peptide (FSAP) family. Brevinin subfamily. As to expression, expressed by the skin granular glands.

Its subcellular location is the secreted. Functionally, has antibacterial activity against Gram-positive bacteria B.megaterium Bm11, S.lentus and M.luteus, and Gram-negative bacteria E.coli D22, Y.pseudotuberculosis YP III and P.syringae pv tabaci, and antifungal activity against C.albicans ATCC 10231, C.tropicalis, C.guiller-mondii and P.nicotianae spores. Has weak hemolytic activity. The mature peptide inserts into the hydrophobic core of the bacterial cell membrane and increases permeability without disrupting membrane integrity. Probably binds to the outer membrane surface before aggregating to form transmembrane pores. The protein is Ranacyclin-T (RNCT) of Rana temporaria (European common frog).